Here is a 143-residue protein sequence, read N- to C-terminus: Small ribosomal subunit protein uS9 (143 aa).

A disordered region spans residues 123–143 (RPEPKKFGGRGARARFQKSYR). Basic residues predominate over residues 134 to 143 (ARARFQKSYR).

Belongs to the universal ribosomal protein uS9 family.

The chain is Small ribosomal subunit protein uS9 (RPS16) from Eremothecium gossypii (strain ATCC 10895 / CBS 109.51 / FGSC 9923 / NRRL Y-1056) (Yeast).